Here is a 389-residue protein sequence, read N- to C-terminus: Glutamate 5-kinase (389 aa).

Residue K26 participates in ATP binding. Residues S66, D153, and N167 each coordinate substrate. An ATP-binding site is contributed by 187 to 188 (TD). In terms of domain architecture, PUA spans 293–371 (AGTLFLDQGA…EQIEWILGHR (79 aa)).

This sequence belongs to the glutamate 5-kinase family.

Its subcellular location is the cytoplasm. The catalysed reaction is L-glutamate + ATP = L-glutamyl 5-phosphate + ADP. It participates in amino-acid biosynthesis; L-proline biosynthesis; L-glutamate 5-semialdehyde from L-glutamate: step 1/2. Its function is as follows. Catalyzes the transfer of a phosphate group to glutamate to form L-glutamate 5-phosphate. The protein is Glutamate 5-kinase of Rhodopirellula baltica (strain DSM 10527 / NCIMB 13988 / SH1).